We begin with the raw amino-acid sequence, 309 residues long: Aspartate carbamoyltransferase catalytic subunit (309 aa).

Carbamoyl phosphate is bound by residues R55 and T56. K85 provides a ligand contact to L-aspartate. Carbamoyl phosphate-binding residues include R106, H135, and Q138. L-aspartate is bound by residues R168 and R230. Positions 268 and 269 each coordinate carbamoyl phosphate.

Belongs to the aspartate/ornithine carbamoyltransferase superfamily. ATCase family. As to quaternary structure, heterododecamer (2C3:3R2) of six catalytic PyrB chains organized as two trimers (C3), and six regulatory PyrI chains organized as three dimers (R2).

It catalyses the reaction carbamoyl phosphate + L-aspartate = N-carbamoyl-L-aspartate + phosphate + H(+). Its pathway is pyrimidine metabolism; UMP biosynthesis via de novo pathway; (S)-dihydroorotate from bicarbonate: step 2/3. In terms of biological role, catalyzes the condensation of carbamoyl phosphate and aspartate to form carbamoyl aspartate and inorganic phosphate, the committed step in the de novo pyrimidine nucleotide biosynthesis pathway. This is Aspartate carbamoyltransferase catalytic subunit from Aliivibrio fischeri (strain MJ11) (Vibrio fischeri).